We begin with the raw amino-acid sequence, 261 residues long: Eukaryotic translation initiation factor 3 subunit J-A (261 aa).

Positions 1 to 11 are enriched in low complexity; it reads MAAAAAAAAAA. Positions 1 to 113 are disordered; that stretch reads MAAAAAAAAA…EPEESKVLTP (113 aa). The interval 4–72 is sufficient for interaction with EIF3B; sequence AAAAAAAAGD…KEEAEVKPEV (69 aa). Phosphoserine is present on residues S14, S16, and S23. The span at 43-64 shows a compositional bias: acidic residues; the sequence is EGEDEDEDVKDNWDDDDDENKE. Residues 65-109 are compositionally biased toward basic and acidic residues; sequence EAEVKPEVKISEKKKIAEKIKEKERQQKKRQEEIKKRLEEPEESK. Residues 73-138 are a coiled coil; that stretch reads KISEKKKIAE…ESDLELAKET (66 aa). K109 participates in a covalent cross-link: Glycyl lysine isopeptide (Lys-Gly) (interchain with G-Cter in SUMO2). At T112 the chain carries Phosphothreonine. S130 carries the phosphoserine modification. Residues 246-261 form a promotes stable association with the 40S ribosome region; it reads YGGYEGGYVQDYEDFM. Y257 bears the Phosphotyrosine mark.

It belongs to the eIF-3 subunit J family. In terms of assembly, component of the eukaryotic translation initiation factor 3 (eIF-3) complex, which is composed of 13 subunits: EIF3A, EIF3B, EIF3C, EIF3D, EIF3E, EIF3F, EIF3G, EIF3H, EIF3I, EIF3J, EIF3K, EIF3L and EIF3M. The eIF-3 complex appears to include 3 stable modules: module A is composed of EIF3A, EIF3B, EIF3G and EIF3I; module B is composed of EIF3F, EIF3H, and EIF3M; and module C is composed of EIF3C, EIF3D, EIF3E, EIF3K and EIF3L. EIF3C of module C binds EIF3B of module A and EIF3H of module B, thereby linking the three modules. EIF3J is a labile subunit that binds to the eIF-3 complex via EIF3B. The eIF-3 complex interacts with RPS6KB1 under conditions of nutrient depletion. Mitogenic stimulation leads to binding and activation of a complex composed of MTOR and RPTOR, leading to phosphorylation and release of RPS6KB1 and binding of EIF4B to eIF-3. Phosphorylated. Phosphorylation is enhanced upon serum stimulation.

It is found in the cytoplasm. In terms of biological role, component of the eukaryotic translation initiation factor 3 (eIF-3) complex, which is required for several steps in the initiation of protein synthesis. The eIF-3 complex associates with the 40S ribosome and facilitates the recruitment of eIF-1, eIF-1A, eIF-2:GTP:methionyl-tRNAi and eIF-5 to form the 43S pre-initiation complex (43S PIC). The eIF-3 complex stimulates mRNA recruitment to the 43S PIC and scanning of the mRNA for AUG recognition. The eIF-3 complex is also required for disassembly and recycling of post-termination ribosomal complexes and subsequently prevents premature joining of the 40S and 60S ribosomal subunits prior to initiation. The eIF-3 complex specifically targets and initiates translation of a subset of mRNAs involved in cell proliferation, including cell cycling, differentiation and apoptosis, and uses different modes of RNA stem-loop binding to exert either translational activation or repression. This subunit binds directly within the mRNA entry channel of the 40S ribosome to the aminoacyl (A) site. It may regulate the interaction between the 43S PIC and mRNA. The sequence is that of Eukaryotic translation initiation factor 3 subunit J-A (Eif3j1) from Mus musculus (Mouse).